The following is a 323-amino-acid chain: uncharacterized protein (323 aa).

Tyr59 (proton donor) is an active-site residue. Residue 198 to 208 participates in NADP(+) binding; that stretch reads SPLAQGLLGGK.

It belongs to the aldo/keto reductase family. Aldo/keto reductase 2 subfamily.

This is an uncharacterized protein from Mycobacterium tuberculosis (strain CDC 1551 / Oshkosh).